Consider the following 209-residue polypeptide: Small ribosomal subunit protein uS3 (209 aa).

The KH type-2 domain maps to 17-86; it reads IDEFLEKELR…NPQIEVEEIK (70 aa).

This sequence belongs to the universal ribosomal protein uS3 family. In terms of assembly, part of the 30S ribosomal subunit.

Functionally, binds the lower part of the 30S subunit head. The sequence is that of Small ribosomal subunit protein uS3 from Thermococcus kodakarensis (strain ATCC BAA-918 / JCM 12380 / KOD1) (Pyrococcus kodakaraensis (strain KOD1)).